The following is a 149-amino-acid chain: Flagellar basal-body protein FlbY (149 aa).

The basal body constitutes a major portion of the flagellar organelle and consists of five rings (E,L,P,S, and M) mounted on a central rod.

It is found in the bacterial flagellum basal body. The protein is Flagellar basal-body protein FlbY (flbY) of Caulobacter vibrioides (strain ATCC 19089 / CIP 103742 / CB 15) (Caulobacter crescentus).